Reading from the N-terminus, the 61-residue chain is Large ribosomal subunit protein bL28 (61 aa).

Residues 1-26 (MAKDFLNGKRTHFGNKRSHALNSSRR) are disordered. Residues 9 to 19 (KRTHFGNKRSH) are compositionally biased toward basic residues.

The protein belongs to the bacterial ribosomal protein bL28 family.

This Levilactobacillus brevis (strain ATCC 367 / BCRC 12310 / CIP 105137 / JCM 1170 / LMG 11437 / NCIMB 947 / NCTC 947) (Lactobacillus brevis) protein is Large ribosomal subunit protein bL28.